Here is a 512-residue protein sequence, read N- to C-terminus: Glutathione-binding protein GsiB (512 aa).

An N-terminal signal peptide occupies residues 1–26; it reads MTQFITHKWLAALGLASSIAAFPALA.

Belongs to the bacterial solute-binding protein 5 family. As to quaternary structure, the complex is composed of two ATP-binding proteins (GsiA), two transmembrane proteins (GsiC and GsiD) and a solute-binding protein (GsiB).

It is found in the periplasm. Functionally, part of the ABC transporter complex GsiABCD involved in glutathione import. Binds glutathione. This chain is Glutathione-binding protein GsiB, found in Salmonella typhi.